Here is a 309-residue protein sequence, read N- to C-terminus: Homoserine kinase (309 aa).

91–101 (PIGSGLGSSAC) is a binding site for ATP.

It belongs to the GHMP kinase family. Homoserine kinase subfamily.

The protein resides in the cytoplasm. It carries out the reaction L-homoserine + ATP = O-phospho-L-homoserine + ADP + H(+). The protein operates within amino-acid biosynthesis; L-threonine biosynthesis; L-threonine from L-aspartate: step 4/5. Catalyzes the ATP-dependent phosphorylation of L-homoserine to L-homoserine phosphate. The protein is Homoserine kinase of Buchnera aphidicola subsp. Acyrthosiphon pisum (strain 5A).